Here is a 343-residue protein sequence, read N- to C-terminus: Phenylalanine--tRNA ligase alpha subunit (343 aa).

Glu-264 serves as a coordination point for Mg(2+).

This sequence belongs to the class-II aminoacyl-tRNA synthetase family. Phe-tRNA synthetase alpha subunit type 1 subfamily. Tetramer of two alpha and two beta subunits. Requires Mg(2+) as cofactor.

It is found in the cytoplasm. It catalyses the reaction tRNA(Phe) + L-phenylalanine + ATP = L-phenylalanyl-tRNA(Phe) + AMP + diphosphate + H(+). This chain is Phenylalanine--tRNA ligase alpha subunit, found in Azoarcus sp. (strain BH72).